The chain runs to 256 residues: Thiazole synthase (256 aa).

The active-site Schiff-base intermediate with DXP is lysine 95. 1-deoxy-D-xylulose 5-phosphate is bound by residues glycine 156, 182-183, and 204-205; these read AG and NT.

It belongs to the ThiG family. In terms of assembly, homotetramer. Forms heterodimers with either ThiH or ThiS.

The protein resides in the cytoplasm. It catalyses the reaction [ThiS sulfur-carrier protein]-C-terminal-Gly-aminoethanethioate + 2-iminoacetate + 1-deoxy-D-xylulose 5-phosphate = [ThiS sulfur-carrier protein]-C-terminal Gly-Gly + 2-[(2R,5Z)-2-carboxy-4-methylthiazol-5(2H)-ylidene]ethyl phosphate + 2 H2O + H(+). Its pathway is cofactor biosynthesis; thiamine diphosphate biosynthesis. In terms of biological role, catalyzes the rearrangement of 1-deoxy-D-xylulose 5-phosphate (DXP) to produce the thiazole phosphate moiety of thiamine. Sulfur is provided by the thiocarboxylate moiety of the carrier protein ThiS. In vitro, sulfur can be provided by H(2)S. This chain is Thiazole synthase, found in Escherichia coli (strain 55989 / EAEC).